The primary structure comprises 344 residues: Melanocyte-stimulating hormone receptor (344 aa).

At 1–37 (MPMQGAQRKLLGSLNSTPTATSNLGLAANHTGAPCLE) the chain is on the extracellular side. N-linked (GlcNAc...) asparagine glycosylation is present at Asn-29. A helical membrane pass occupies residues 38-63 (VPIPDGLFLSLGLVSLVENVLVVAAI). Topologically, residues 64–72 (AKNRNLHSS) are cytoplasmic. The helical transmembrane segment at 73-93 (MYCFICCLAVSDLLVSGSNML) threads the bilayer. Residues 94 to 118 (ETAIILLLEAGALVTRASVVQQLHN) are Extracellular-facing. A helical membrane pass occupies residues 119-140 (TIDVLTCSSMLCSLCFLGAIAV). Over 141 to 163 (DRYISIFYALRYHSIMTLPRAQR) the chain is Cytoplasmic. Residues 164 to 183 (AIAAIWVASVLSSTLFITYY) traverse the membrane as a helical segment. At 184–191 (DHAAVLLC) the chain is on the extracellular side. Residues 192 to 211 (LVVFFLAMLVLMAVLYVHML) form a helical membrane-spanning segment. Topologically, residues 212 to 240 (ARACQHAQGIIRLHKRQPPAHKGFGLRGA) are cytoplasmic. The helical transmembrane segment at 241 to 266 (ATLTILLGIFFLCWGPFFLHLTLVVF) threads the bilayer. The Extracellular segment spans residues 267–279 (CPQHMTCSCIFKN). A helical membrane pass occupies residues 280-300 (FKVFLTLIICNTIIDPLIYAF). Residues 301–344 (RSQELRRTLKEVLLCSRWPGCWAEGGGDSVWPGSCVTLRGPLPP) lie on the Cytoplasmic side of the membrane. Cys-315 carries the S-palmitoyl cysteine lipid modification.

This sequence belongs to the G-protein coupled receptor 1 family. As to quaternary structure, interacts with MGRN1, but does not undergo MGRN1-mediated ubiquitination; this interaction competes with GNAS-binding and thus inhibits agonist-induced cAMP production. Interacts with OPN3; the interaction results in a decrease in MC1R-mediated cAMP signaling and ultimately a decrease in melanin production in melanocytes.

The protein resides in the cell membrane. Its function is as follows. Receptor for MSH (alpha, beta and gamma) and ACTH. The activity of this receptor is mediated by G proteins which activate adenylate cyclase. Mediates melanogenesis, the production of eumelanin (black/brown) and phaeomelanin (red/yellow), via regulation of cAMP signaling in melanocytes. This Callimico goeldii (Goeldi's marmoset) protein is Melanocyte-stimulating hormone receptor (MC1R).